A 164-amino-acid chain; its full sequence is R-phycoerythrin alpha chain (164 aa).

(2R,3E)-phycoerythrobilin is bound by residues Asn47, Lys81, Cys82, Arg84, His88, Arg137, Cys139, and Arg142.

It belongs to the phycobiliprotein family. In terms of assembly, heterododecamer of 6 alpha and 6 beta chains. The basic functional unit of phycobiliproteins is a ring-shaped hexamer formed from two back-to-back trimers contacting via the alpha chain subunits. The trimers are composed of alpha/beta subunit heterodimers arranged around a three-fold axis of symmetry. The phycoerythrins also contain a gamma subunit which is located in the center of the hexamer. Post-translationally, contains two covalently linked phycoerythrobilin chromophores. In PubMed:8876649 the authors refer to the bilins as phycoerythrobilins. In the PDB entries, the bilins are named as phycocyanobilins although the modeled compounds correspond to phycoerythrobilins.

Its subcellular location is the plastid. The protein resides in the chloroplast thylakoid membrane. Its function is as follows. Light-harvesting photosynthetic tetrapyrrole chromophore-protein from the phycobiliprotein complex. In Polysiphonia urceolata (Red alga), this protein is R-phycoerythrin alpha chain (cpeA).